The following is a 1249-amino-acid chain: Protein STU1 (1249 aa).

Composition is skewed to low complexity over residues 138-156 (LNSS…TATK) and 555-574 (AASP…PSSA). 6 disordered regions span residues 138–161 (LNSS…KPHE), 545–619 (KQLE…NPVF), 644–718 (HVET…LGLG), 755–846 (AEHE…NGNI), 860–891 (AFQT…RPEA), and 1084–1118 (HPAP…EKRT). A compositionally biased stretch (basic and acidic residues) spans 581 to 600 (KKMDLKAMLAERRRAVKEAG). Low complexity-rich tracts occupy residues 647 to 667 (TSSP…RIRP) and 708 to 718 (SPSLSPSLGLG). A compositionally biased stretch (basic and acidic residues) spans 755 to 774 (AEHEVDELTLKEGQKTRDDG). Composition is skewed to polar residues over residues 809–822 (QQGN…SGRV), 831–844 (ATGT…SRNG), and 863–878 (TPLN…SSAI). A compositionally biased stretch (low complexity) spans 1089–1111 (SSSADNSDPMTSALSQLSLSSSK).

This sequence belongs to the CLASP family. As to quaternary structure, interacts with microtubules.

The protein localises to the cytoplasm. It localises to the cytoskeleton. Its subcellular location is the nucleus. The protein resides in the spindle. In terms of biological role, microtubule binding protein that promotes the stabilization of dynamic microtubules. Required for mitotic spindle formation. The chain is Protein STU1 (STU1) from Cryptococcus neoformans var. neoformans serotype D (strain JEC21 / ATCC MYA-565) (Filobasidiella neoformans).